An 86-amino-acid polypeptide reads, in one-letter code: MSIDTQSIIENNKRSAHDTGSPEVQVALLTARIELLTKHFKIHKKDHHSRRGLLQMVNRRRSLLDYLNKKDNERYKLLIEKLGLRR.

Polar residues predominate over residues Met1 to Glu10. The tract at residues Met1 to Ser21 is disordered.

Belongs to the universal ribosomal protein uS15 family. As to quaternary structure, part of the 30S ribosomal subunit. Forms a bridge to the 50S subunit in the 70S ribosome, contacting the 23S rRNA.

In terms of biological role, one of the primary rRNA binding proteins, it binds directly to 16S rRNA where it helps nucleate assembly of the platform of the 30S subunit by binding and bridging several RNA helices of the 16S rRNA. Functionally, forms an intersubunit bridge (bridge B4) with the 23S rRNA of the 50S subunit in the ribosome. This is Small ribosomal subunit protein uS15 from Xylella fastidiosa (strain 9a5c).